The chain runs to 304 residues: Protoheme IX farnesyltransferase (304 aa).

Helical transmembrane passes span 31–51 (VNTL…PDGL), 58–78 (VAAT…NCLI), 99–119 (LAPA…LTVL), 126–146 (LTMW…TVLL), 154–174 (IVIG…AVTG), 180–200 (ALLL…ALAL), 222–242 (FTRL…LLPF), 243–263 (ATRM…IGFL), and 284–304 (FSIL…YLPL).

The protein belongs to the UbiA prenyltransferase family. Protoheme IX farnesyltransferase subfamily.

The protein localises to the cell inner membrane. It carries out the reaction heme b + (2E,6E)-farnesyl diphosphate + H2O = Fe(II)-heme o + diphosphate. Its pathway is porphyrin-containing compound metabolism; heme O biosynthesis; heme O from protoheme: step 1/1. Functionally, converts heme B (protoheme IX) to heme O by substitution of the vinyl group on carbon 2 of heme B porphyrin ring with a hydroxyethyl farnesyl side group. The sequence is that of Protoheme IX farnesyltransferase from Aromatoleum aromaticum (strain DSM 19018 / LMG 30748 / EbN1) (Azoarcus sp. (strain EbN1)).